A 1055-amino-acid polypeptide reads, in one-letter code: Ubiquitin carboxyl-terminal hydrolase 25 (1055 aa).

Positions 14–57 constitute a UBA-like domain; it reads QKHQQTFLNQLREITGINDTQILQQALKDSNGNLELAVAFLTAK. Residues 77 to 102 form an SUMO interaction domain (SIM) region; the sequence is NDRYISVGSQADTNVIDLTGDDKDDL. Serine 85 bears the Phosphoserine mark. Positions 89-95 match the Required for SUMO paralog-specific binding motif; the sequence is TNVIDLT. UIM domains lie at 97-116 and 123-140; these read DDKD…SNRA and TDEE…IAEN. Lysine 99 is covalently cross-linked (Glycyl lysine isopeptide (Lys-Gly) (interchain with G-Cter in SUMO); alternate). Lysine 99 participates in a covalent cross-link: Glycyl lysine isopeptide (Lys-Gly) (interchain with G-Cter in ubiquitin); alternate. The 489-residue stretch at 169 to 657 folds into the USP domain; that stretch reads VGLKNVGNTC…SAYCLMYIND (489 aa). The active site involves cysteine 178. The segment at 464 to 507 is disordered; that stretch reads VCTSPVDDIDASSPPSGSIPSQTLPSTTEQQGALSSELPSTSPS. A compositionally biased stretch (polar residues) spans 476–496; the sequence is SPPSGSIPSQTLPSTTEQQGA. The segment covering 497–507 has biased composition (low complexity); that stretch reads LSSELPSTSPS. The stretch at 541-578 forms a coiled coil; the sequence is TEEELSVLESCLHRWRTEIENDTRDLQESISRIHRTIE. Catalysis depends on residues histidine 599 and histidine 607. Residues 684–717 adopt a coiled-coil conformation; that stretch reads DLRDFVEEDNQRFEKELEEWDAQLAQKALQEKLL. Residues 727–749 form a disordered region; that stretch reads TSVTTAQAAGDPEYLEQPSRSDF. Tyrosine 740 carries the phosphotyrosine modification.

This sequence belongs to the peptidase C19 family. As to quaternary structure, homotetramer, inhibited form. Homodimer, active form. Interacts with ACTA1 (via its C-terminus); the interaction occurs for all isoforms but is strongest for isoform USP25m in muscle differentiating cells. Interacts (isoform USP25m only) with MYBPC1; the interaction prevents proteasomal degradation of MYBPC1. Interacts (isoform USP25m only) with FLNC (via filament repeats 17-18, 20-21 and 24). Interacts with GAPDH. Interacts with SUMO3; the interaction sumoylates efficiently USP25. Interacts with SUMO2; the interaction sumoylates efficiently USP25. Interacts with SUMO1; the interaction only weakly sumoylates USP25. Interacts with SYK; phosphorylates USP25 and regulates USP25 intracellular levels. In terms of processing, acetylated. Sumoylation impairs binding to and hydrolysis of ubiquitin chains. Sumoylated preferentially with SUMO2 or SUMO3. Desumoylated by SENP1. Polyubiquitinated by SMURF1 by promoting the 'Lys-48'-linkage leading to proteasomal degradation. Post-translationally, preferentially monoubiquitinated but can also be polyubiquitinated. Autodeubiquitinated. Ubiquitination activates the enzymatic activity either by preventing sumoylation or by allowing novel interactions. In terms of processing, phosphorylation in the C-terminal by SYK regulates USP25 cellular levels. Isoform USP25a is found in most adult and fetal tissues; expression is moderately high in testis, pancreas, kidney, skeletal muscle, liver, lung, placenta, heart, but very low in peripheral blood, colon, small intestine, ovary, prostate, thymus and spleen. Expressed in the brain, with high levels in the cerebral cortex. Isoform USP25b is found in all tissues except heart and skeletal muscle. Isoform USP25m is heart and skeletal muscle specific.

The protein localises to the cytoplasm. The protein resides in the nucleus. It catalyses the reaction Thiol-dependent hydrolysis of ester, thioester, amide, peptide and isopeptide bonds formed by the C-terminal Gly of ubiquitin (a 76-residue protein attached to proteins as an intracellular targeting signal).. Its function is as follows. Deubiquitinating enzyme that hydrolyzes ubiquitin moieties conjugated to substrates and thus, functions in various biological processes including inflammation and immune response. Modulates the Wnt/beta-catenin pathway by deubiquitinating and stabilizing tankyrases TNKS1 and TNKS2. Regulates KEAP1-NRF2 axis in the defense against oxidative assaults by deubiquitinating KEAP1 and protecting it from degradation leading to degradation of the NRF2 transcription factor that is responsible for mounting an anti-oxidation gene expression program. Positively regulates RNA virus-induced innate signaling by interacting with and deubiquitinating ERLIN1 and ERLIN2. In turn, restricts virus production by regulating cholesterol biosynthetic flux. Acts as a negative regulator of interleukin-17-mediated signaling and inflammation through the removal of 'Lys-63'-linked ubiquitination of TRAF5 and TRAF6. Prevents the ubiquitination and degradation of TRAF3 to reduce the phosphorylation levels of JNK and P38, the secretion of IL-1B and to induce endotoxin tolerance. Functionally, the muscle-specific isoform (USP25m) may have a role in the regulation of muscular differentiation and function. The polypeptide is Ubiquitin carboxyl-terminal hydrolase 25 (USP25) (Homo sapiens (Human)).